The chain runs to 163 residues: Probable chemoreceptor glutamine deamidase CheD (163 aa).

Belongs to the CheD family.

It catalyses the reaction L-glutaminyl-[protein] + H2O = L-glutamyl-[protein] + NH4(+). Functionally, probably deamidates glutamine residues to glutamate on methyl-accepting chemotaxis receptors (MCPs), playing an important role in chemotaxis. This is Probable chemoreceptor glutamine deamidase CheD from Borrelia turicatae (strain 91E135).